The following is a 150-amino-acid chain: MIP18 family protein FAM96A (150 aa).

Belongs to the MIP18 family.

In terms of biological role, may play a role in chromosome segregation through establishment of sister chromatid cohesion. The chain is MIP18 family protein FAM96A (fam96A) from Dictyostelium discoideum (Social amoeba).